The following is a 288-amino-acid chain: Probable prolyl 4-hydroxylase 9 (288 aa).

Over methionine 1–lysine 12 the chain is Cytoplasmic. A helical; Signal-anchor for type II membrane protein membrane pass occupies residues leucine 13–serine 33. Over threonine 34–glutamate 288 the chain is Lumenal. The region spanning histidine 164 to aspartate 283 is the Fe2OG dioxygenase domain. Fe cation-binding residues include histidine 182 and aspartate 184. 2 N-linked (GlcNAc...) asparagine glycosylation sites follow: asparagine 221 and asparagine 255. Position 264 (histidine 264) interacts with Fe cation. Residue lysine 274 coordinates 2-oxoglutarate.

This sequence belongs to the P4HA family. The cofactor is Fe(2+). It depends on L-ascorbate as a cofactor.

The protein localises to the endoplasmic reticulum membrane. It is found in the golgi apparatus. It carries out the reaction L-prolyl-[collagen] + 2-oxoglutarate + O2 = trans-4-hydroxy-L-prolyl-[collagen] + succinate + CO2. Its function is as follows. Catalyzes the post-translational formation of 4-hydroxyproline in -Xaa-Pro-Gly- sequences in proline-rich peptide sequences of plant glycoproteins and other proteins. Hydroxyprolines are important constituent of many plant cell wall glycoproteins such as extensins, hydroxyproline-rich glycoproteins, lectins and arabinogalactan proteins. This chain is Probable prolyl 4-hydroxylase 9, found in Arabidopsis thaliana (Mouse-ear cress).